The following is a 486-amino-acid chain: Malonate-semialdehyde dehydrogenase (486 aa).

NAD(+)-binding residues include Phe154, Lys178, Glu181, Arg182, and Ser231. Residue Cys286 is the Nucleophile of the active site. Glu386 contributes to the NAD(+) binding site.

Belongs to the aldehyde dehydrogenase family. IolA subfamily. As to quaternary structure, homotetramer.

It catalyses the reaction 3-oxopropanoate + NAD(+) + CoA + H2O = hydrogencarbonate + acetyl-CoA + NADH + H(+). The enzyme catalyses 2-methyl-3-oxopropanoate + NAD(+) + CoA + H2O = propanoyl-CoA + hydrogencarbonate + NADH + H(+). Its pathway is polyol metabolism; myo-inositol degradation into acetyl-CoA; acetyl-CoA from myo-inositol: step 7/7. Catalyzes the oxidation of malonate semialdehyde (MSA) and methylmalonate semialdehyde (MMSA) into acetyl-CoA and propanoyl-CoA, respectively. Is involved in a myo-inositol catabolic pathway. Bicarbonate, and not CO2, is the end-product of the enzymatic reaction. This is Malonate-semialdehyde dehydrogenase from Bacillus cytotoxicus (strain DSM 22905 / CIP 110041 / 391-98 / NVH 391-98).